We begin with the raw amino-acid sequence, 470 residues long: Glutathione reductase (470 aa).

FAD is bound by residues Ser-16 and Gly-17. A glutathione-binding site is contributed by Ser-16. Arg-23 is a binding site for glutathione. Glu-36, Thr-43, Cys-44, and Lys-52 together coordinate FAD. An intrachain disulfide couples Cys-44 to Cys-49. Tyr-104 is a glutathione binding site. Ala-120 contributes to the FAD binding site. NADP(+) is bound by residues Gly-190, Ile-193, Glu-196, Arg-213, and Arg-219. Residue Thr-228 coordinates glutathione. Gly-280 is an NADP(+) binding site. Asp-321 lines the FAD pocket. Residue Glu-327 participates in NADP(+) binding. Thr-329 contacts FAD. Position 337 (Arg-337) interacts with glutathione. Ala-362 lines the NADP(+) pocket. Lys-412 contacts glutathione. His-459 contributes to the FAD binding site. His-459 acts as the Proton acceptor in catalysis.

This sequence belongs to the class-I pyridine nucleotide-disulfide oxidoreductase family. As to quaternary structure, homodimer. Requires FAD as cofactor.

The protein resides in the cytoplasm. Its subcellular location is the mitochondrion. The catalysed reaction is 2 glutathione + NADP(+) = glutathione disulfide + NADPH + H(+). In terms of biological role, catalyzes the reduction of glutathione disulfide (GSSG) to reduced glutathione (GSH). Constitutes the major mechanism to maintain a high GSH:GSSG ratio in the cytosol. In Yarrowia lipolytica (strain CLIB 122 / E 150) (Yeast), this protein is Glutathione reductase (GLR1).